Here is a 323-residue protein sequence, read N- to C-terminus: Prostaglandin F synthase 1 (323 aa).

NADP(+) is bound by residues 20–24 (GFGTY) and Asp50. The Proton donor role is filled by Tyr55. His117 contributes to the substrate binding site. Residues 166–167 (SN), Gln190, 216–221 (YAALGA), and 270–280 (KSFNKKRIKEN) each bind NADP(+).

The protein belongs to the aldo/keto reductase family. In terms of assembly, monomer. The N-terminus is blocked.

Its subcellular location is the cytoplasm. The enzyme catalyses prostaglandin F2alpha + NADP(+) = prostaglandin D2 + NADPH + H(+). It functions in the pathway lipid metabolism; prostaglandin biosynthesis. In terms of biological role, catalyzes the reduction of PGD(2) and PGH(2) to PGF(2 alpha) and a stereoisomer, respectively. It has a broad substrate specificity and also reduces other carbonyl compounds. The sequence is that of Prostaglandin F synthase 1 from Bos taurus (Bovine).